The following is a 27-amino-acid chain: Flagellar filament 34 kDa core protein (27 aa).

It belongs to the bacterial flagellin family. The flagellum consists of an outer layer composed of repeating units of FlaA around a core that contains one or all of five antigenically related polypeptides.

Its subcellular location is the periplasmic flagellum. It localises to the periplasm. In terms of biological role, component of the core of the flagella. In Spirochaeta aurantia, this protein is Flagellar filament 34 kDa core protein.